Reading from the N-terminus, the 64-residue chain is Large ribosomal subunit protein uL30 (64 aa).

It belongs to the universal ribosomal protein uL30 family. Part of the 50S ribosomal subunit.

The protein is Large ribosomal subunit protein uL30 of Beijerinckia indica subsp. indica (strain ATCC 9039 / DSM 1715 / NCIMB 8712).